The chain runs to 224 residues: Ribosomal RNA large subunit methyltransferase E (224 aa).

The S-adenosyl-L-methionine site is built by Gly64, Trp66, Asp97, Asp113, and Asp138. Lys178 serves as the catalytic Proton acceptor.

It belongs to the class I-like SAM-binding methyltransferase superfamily. RNA methyltransferase RlmE family.

It is found in the cytoplasm. The enzyme catalyses uridine(2552) in 23S rRNA + S-adenosyl-L-methionine = 2'-O-methyluridine(2552) in 23S rRNA + S-adenosyl-L-homocysteine + H(+). Functionally, specifically methylates the uridine in position 2552 of 23S rRNA at the 2'-O position of the ribose in the fully assembled 50S ribosomal subunit. The chain is Ribosomal RNA large subunit methyltransferase E from Methylibium petroleiphilum (strain ATCC BAA-1232 / LMG 22953 / PM1).